Consider the following 85-residue polypeptide: High-potential iron-sulfur protein (85 aa).

Positions 43, 46, 63, and 77 each coordinate [4Fe-4S] cluster.

This sequence belongs to the high-potential iron-sulfur protein (HiPIP) family. Homodimer.

It localises to the periplasm. Functionally, specific class of high-redox-potential 4Fe-4S ferredoxins. Functions in anaerobic electron transport in most purple and in some other photosynthetic bacteria and in at least one genus (Paracoccus) of halophilic, denitrifying bacteria. This is High-potential iron-sulfur protein from Allochromatium warmingii (Chromatium warmingii).